We begin with the raw amino-acid sequence, 318 residues long: Pantothenate kinase (318 aa).

Residue 96–103 (GSVAVGKS) participates in ATP binding.

This sequence belongs to the prokaryotic pantothenate kinase family.

The protein localises to the cytoplasm. The enzyme catalyses (R)-pantothenate + ATP = (R)-4'-phosphopantothenate + ADP + H(+). Its pathway is cofactor biosynthesis; coenzyme A biosynthesis; CoA from (R)-pantothenate: step 1/5. The sequence is that of Pantothenate kinase from Rhodopseudomonas palustris (strain ATCC BAA-98 / CGA009).